The sequence spans 500 residues: Lysine--tRNA ligase (500 aa).

2 residues coordinate Mg(2+): Glu-410 and Glu-417.

This sequence belongs to the class-II aminoacyl-tRNA synthetase family. In terms of assembly, homodimer. Mg(2+) serves as cofactor.

The protein localises to the cytoplasm. It carries out the reaction tRNA(Lys) + L-lysine + ATP = L-lysyl-tRNA(Lys) + AMP + diphosphate. This Pseudomonas putida (strain ATCC 47054 / DSM 6125 / CFBP 8728 / NCIMB 11950 / KT2440) protein is Lysine--tRNA ligase.